Reading from the N-terminus, the 123-residue chain is Large ribosomal subunit protein uL22c (123 aa).

It belongs to the universal ribosomal protein uL22 family. Part of the 50S ribosomal subunit.

It localises to the plastid. The protein localises to the chloroplast. In terms of biological role, this protein binds specifically to 23S rRNA. Its function is as follows. The globular domain of the protein is located near the polypeptide exit tunnel on the outside of the subunit, while an extended beta-hairpin is found that lines the wall of the exit tunnel in the center of the 70S ribosome. This is Large ribosomal subunit protein uL22c (rpl22) from Illicium oligandrum (Star anise).